A 422-amino-acid chain; its full sequence is MSAQLEADVRTMSPEMPAMFDGMKLAAVAAVLYVIVRSLNLKCPTAAADITCQDTLLNHYLLKSCPVLTKEYIPPLLWGKSGHLQTALYGKIGRVKSPKPCGLRKFLPMQDGATATFDLFEPQGVHSTGDDITMVICPGIGNHSEKHYIRTFVDYSQKQGYRCAVLNHLGALPNIELTSPRMFTYGCTWEFSAMVGFIKRTFPQTQLIVVGFSLGGNIACKYLGENPANQERVLCCVSVCQGYSALRAQETFLQWDQCRRLYNFLMADNMKKIILSHRGSLFGMNSSRMEFADLSRLYTATSLMQIDDNIMRKFHGHNSLKEYYEKESCVHYIHNISVPLLLVNSSDDPLVHQSLLTIPRTLAEKKQNVIFALTLHGGHLGFFEGAVLFPQPLSWMDKVIVSYANAVCQWEKHKPQCHQQKE.

The Cytoplasmic portion of the chain corresponds to 1-15 (MSAQLEADVRTMSPE). A helical; Signal-anchor for type II membrane protein transmembrane segment spans residues 16-36 (MPAMFDGMKLAAVAAVLYVIV). The Extracellular portion of the chain corresponds to 37-422 (RSLNLKCPTA…HKPQCHQQKE (386 aa)). An AB hydrolase-1 domain is found at 134–385 (MVICPGIGNH…HGGHLGFFEG (252 aa)). Asn142 is a glycosylation site (N-linked (GlcNAc...) asparagine). Ser213 functions as the Nucleophile in the catalytic mechanism. N-linked (GlcNAc...) asparagine glycans are attached at residues Asn285, Asn335, and Asn344. Residues Asp348 and His379 each act as charge relay system in the active site.

The protein belongs to the AB hydrolase superfamily. AB hydrolase 4 family.

Its subcellular location is the cell membrane. It catalyses the reaction Hydrolyzes glycerol monoesters of long-chain fatty acids.. The catalysed reaction is an acetyl ester + H2O = an aliphatic alcohol + acetate + H(+). The enzyme catalyses a triacylglycerol + H2O = a diacylglycerol + a fatty acid + H(+). It carries out the reaction 2-(5Z,8Z,11Z,14Z-eicosatetraenoyl)-glycerol + H2O = glycerol + (5Z,8Z,11Z,14Z)-eicosatetraenoate + H(+). It catalyses the reaction a butanoate ester + H2O = an aliphatic alcohol + butanoate + H(+). The catalysed reaction is hexadecanoate ester + H2O = an aliphatic alcohol + hexadecanoate + H(+). Its activity is regulated as follows. Acylglycerol lipase activity is activated upon binding to progesterone. Its function is as follows. Progesterone-dependent acylglycerol lipase that catalyzes hydrolysis of endocannabinoid arachidonoylglycerol (AG) from cell membrane. Acts as a progesterone receptor: progesterone-binding activates the acylglycerol lipase activity, mediating degradation of 1-arachidonoylglycerol (1AG) and 2-arachidonoylglycerol (2AG) to glycerol and arachidonic acid (AA). Also displays an ester hydrolase activity against acetyl ester, butanoate ester and hexadecanoate ester. Plays a key role in sperm capacitation in response to progesterone by mediating degradation of 2AG, an inhibitor of the sperm calcium channel CatSper, leading to calcium influx via CatSper and sperm activation. May also play a role in smooth muscle cells migration. This Danio rerio (Zebrafish) protein is Monoacylglycerol lipase ABHD2 (abhd2b).